The following is a 470-amino-acid chain: ATP synthase subunit beta (470 aa).

151 to 158 is a binding site for ATP; that stretch reads GGAGVGKT.

Belongs to the ATPase alpha/beta chains family. In terms of assembly, F-type ATPases have 2 components, CF(1) - the catalytic core - and CF(0) - the membrane proton channel. CF(1) has five subunits: alpha(3), beta(3), gamma(1), delta(1), epsilon(1). CF(0) has three main subunits: a(1), b(2) and c(9-12). The alpha and beta chains form an alternating ring which encloses part of the gamma chain. CF(1) is attached to CF(0) by a central stalk formed by the gamma and epsilon chains, while a peripheral stalk is formed by the delta and b chains.

The protein resides in the cell membrane. The enzyme catalyses ATP + H2O + 4 H(+)(in) = ADP + phosphate + 5 H(+)(out). In terms of biological role, produces ATP from ADP in the presence of a proton gradient across the membrane. The catalytic sites are hosted primarily by the beta subunits. The sequence is that of ATP synthase subunit beta from Mycoplasma mobile (strain ATCC 43663 / 163K / NCTC 11711) (Mesomycoplasma mobile).